Consider the following 624-residue polypeptide: Hemocyanin E chain (624 aa).

Residues H169, H173, H200, H320, H324, and H360 each contribute to the Cu cation site. The N-linked (GlcNAc...) asparagine glycan is linked to N445. C529 and C577 are joined by a disulfide.

This sequence belongs to the tyrosinase family. Hemocyanin subfamily. In terms of assembly, tarantula hemocyanin is a 24-chain polymer with seven different chains identified. In terms of tissue distribution, hemolymph.

The protein resides in the secreted. It localises to the extracellular space. In terms of biological role, hemocyanins are copper-containing oxygen carriers occurring freely dissolved in the hemolymph of many mollusks and arthropods. This chain is Hemocyanin E chain (HCE), found in Aphonopelma sp. (American tarantula).